Reading from the N-terminus, the 713-residue chain is Glutamine-dependent NAD(+) synthetase (713 aa).

A CN hydrolase domain is found at 4–275 (VTLATCNLNQ…IEVITATVDL (272 aa)). The active-site Proton acceptor; for glutaminase activity is the glutamate 44. The active-site For glutaminase activity is the lysine 114. Cysteine 175 serves as the catalytic Nucleophile; for glutaminase activity. Positions 324 to 703 (YNTPAEEIGF…QRPQLKNTVN (380 aa)) are ligase. 354–361 (PLSGGADS) lines the ATP pocket. Serine 356 is a catalytic residue.

It in the C-terminal section; belongs to the NAD synthetase family.

The catalysed reaction is deamido-NAD(+) + L-glutamine + ATP + H2O = L-glutamate + AMP + diphosphate + NAD(+) + H(+). Its pathway is cofactor biosynthesis; NAD(+) biosynthesis; NAD(+) from deamido-NAD(+) (L-Gln route): step 1/1. In Dictyostelium discoideum (Social amoeba), this protein is Glutamine-dependent NAD(+) synthetase (nadsyn1).